The primary structure comprises 517 residues: Splicing factor cactin (517 aa).

Residues 1–14 (MAFRDSTRDFNRSR) show a composition bias toward basic and acidic residues. Positions 1-59 (MAFRDSTRDFNRSRPEKRHASRSSSPRSFRPSNQNARANYNLPRVRDAMKEEERSRETK) are disordered. Positions 22–32 (RSSSPRSFRPS) are enriched in low complexity. The span at 44 to 59 (RVRDAMKEEERSRETK) shows a compositional bias: basic and acidic residues.

It belongs to the CACTIN family. As to quaternary structure, interacts with sde2. Interacts with cdc5.

Functionally, plays a role in pre-mRNA splicing by facilitating excision of introns featuring long spacing between the branchpoint and 3'-splice site (ss). Recruited to the spliceosome by sde2, which may enable folding of the RNA between the BP and 3'-ss to guide the splice site towards the spliceosome's catalytic center. Assists the splicing of several components involved in chromatin organization. In Schizosaccharomyces pombe (strain 972 / ATCC 24843) (Fission yeast), this protein is Splicing factor cactin.